The primary structure comprises 142 residues: Large ribosomal subunit protein uL16 (142 aa).

The protein belongs to the universal ribosomal protein uL16 family. As to quaternary structure, part of the 50S ribosomal subunit.

Its function is as follows. Binds 23S rRNA and is also seen to make contacts with the A and possibly P site tRNAs. This chain is Large ribosomal subunit protein uL16, found in Thermotoga neapolitana (strain ATCC 49049 / DSM 4359 / NBRC 107923 / NS-E).